A 200-amino-acid polypeptide reads, in one-letter code: GTP cyclohydrolase 1 (200 aa).

Positions 87, 90, and 158 each coordinate Zn(2+).

The protein belongs to the GTP cyclohydrolase I family. In terms of assembly, toroid-shaped homodecamer, composed of two pentamers of five dimers.

The catalysed reaction is GTP + H2O = 7,8-dihydroneopterin 3'-triphosphate + formate + H(+). Its pathway is cofactor biosynthesis; 7,8-dihydroneopterin triphosphate biosynthesis; 7,8-dihydroneopterin triphosphate from GTP: step 1/1. This is GTP cyclohydrolase 1 from Xanthomonas campestris pv. campestris (strain ATCC 33913 / DSM 3586 / NCPPB 528 / LMG 568 / P 25).